The sequence spans 307 residues: MNIILFTSLVAFFVFLLILKYWINFQKSKGIGKYIRKEGPSSHFQKSGTPVMGGIIFLIVSIPFLFFKETFFPSLSTILFGLLGLLDDFKLMVNKDYGIRPLRKIFLSFIITLLLYIFSFHDYKIYWGSKLIISSRIFYVILFFVVFIAVPNAINLTDGLDGLAGGTSLITLFFFLIYNFQFNNELTLEISLMITALIAFLWFNSHPAEIFMGDVGAFALGGFIASLSIINKVELLLVFLGGIFLIESLSVFIQVFFYKWKKRRVFLMSPLHHHFELKGWKETKVVWRFYIIHLIMMIGGIILWNLT.

Transmembrane regions (helical) follow at residues 3-23 (IILFTSLVAFFVFLLILKYWI), 47-67 (SGTPVMGGIIFLIVSIPFLFF), 71-91 (FFPSLSTILFGLLGLLDDFKL), 105-125 (IFLSFIITLLLYIFSFHDYKI), 137-157 (IFYVILFFVVFIAVPNAINLT), 162-182 (GLAGGTSLITLFFFLIYNFQF), 186-206 (LTLEISLMITALIAFLWFNSH), 210-230 (IFMGDVGAFALGGFIASLSII), 237-257 (LVFLGGIFLIESLSVFIQVFF), and 285-305 (VVWRFYIIHLIMMIGGIILWN).

The protein belongs to the glycosyltransferase 4 family. MraY subfamily. Mg(2+) is required as a cofactor.

The protein localises to the cell inner membrane. The enzyme catalyses UDP-N-acetyl-alpha-D-muramoyl-L-alanyl-gamma-D-glutamyl-meso-2,6-diaminopimeloyl-D-alanyl-D-alanine + di-trans,octa-cis-undecaprenyl phosphate = di-trans,octa-cis-undecaprenyl diphospho-N-acetyl-alpha-D-muramoyl-L-alanyl-D-glutamyl-meso-2,6-diaminopimeloyl-D-alanyl-D-alanine + UMP. The protein operates within cell wall biogenesis; peptidoglycan biosynthesis. Functionally, catalyzes the initial step of the lipid cycle reactions in the biosynthesis of the cell wall peptidoglycan: transfers peptidoglycan precursor phospho-MurNAc-pentapeptide from UDP-MurNAc-pentapeptide onto the lipid carrier undecaprenyl phosphate, yielding undecaprenyl-pyrophosphoryl-MurNAc-pentapeptide, known as lipid I. The protein is Phospho-N-acetylmuramoyl-pentapeptide-transferase of Dictyoglomus turgidum (strain DSM 6724 / Z-1310).